The primary structure comprises 513 residues: Light-independent protochlorophyllide reductase subunit B (513 aa).

[4Fe-4S] cluster is bound at residue Asp-36. Asp-299 acts as the Proton donor in catalysis. Residue 434–435 coordinates substrate; the sequence is GM.

This sequence belongs to the ChlB/BchB/BchZ family. As to quaternary structure, protochlorophyllide reductase is composed of three subunits; ChlL, ChlN and ChlB. Forms a heterotetramer of two ChlB and two ChlN subunits. [4Fe-4S] cluster serves as cofactor.

Its subcellular location is the plastid. It is found in the chloroplast. It catalyses the reaction chlorophyllide a + oxidized 2[4Fe-4S]-[ferredoxin] + 2 ADP + 2 phosphate = protochlorophyllide a + reduced 2[4Fe-4S]-[ferredoxin] + 2 ATP + 2 H2O. It functions in the pathway porphyrin-containing compound metabolism; chlorophyll biosynthesis (light-independent). In terms of biological role, component of the dark-operative protochlorophyllide reductase (DPOR) that uses Mg-ATP and reduced ferredoxin to reduce ring D of protochlorophyllide (Pchlide) to form chlorophyllide a (Chlide). This reaction is light-independent. The NB-protein (ChlN-ChlB) is the catalytic component of the complex. The sequence is that of Light-independent protochlorophyllide reductase subunit B from Marchantia polymorpha (Common liverwort).